Reading from the N-terminus, the 114-residue chain is MSETIEGGVKIDRLSPGDGKTFPKQGDLVTIHYTGTLENGQKFDSSVDRGSPFQCNIGVGQVIKGWDAGIPKLSVGEKARLTIPGPYAYGPRGFPGLIPPNATLIFDVELLKVN.

In terms of domain architecture, PPIase FKBP-type spans 26–114 (GDLVTIHYTG…IFDVELLKVN (89 aa)).

It belongs to the FKBP-type PPIase family. FKBP1 subfamily.

It localises to the cytoplasm. It carries out the reaction [protein]-peptidylproline (omega=180) = [protein]-peptidylproline (omega=0). Inhibited by both FK506 and rapamycin. Functionally, PPIases accelerate the folding of proteins. It catalyzes the cis-trans isomerization of proline imidic peptide bonds in oligopeptides. This is FK506-binding protein 1 (FPR1) from Candida glabrata (strain ATCC 2001 / BCRC 20586 / JCM 3761 / NBRC 0622 / NRRL Y-65 / CBS 138) (Yeast).